Here is a 202-residue protein sequence, read N- to C-terminus: Dephospho-CoA kinase (202 aa).

Residues 4–201 enclose the DPCK domain; sequence VVALTGGIAS…QKYLAMSRQN (198 aa). Residue 12-17 coordinates ATP; sequence ASGKTT.

This sequence belongs to the CoaE family.

It localises to the cytoplasm. The enzyme catalyses 3'-dephospho-CoA + ATP = ADP + CoA + H(+). Its pathway is cofactor biosynthesis; coenzyme A biosynthesis; CoA from (R)-pantothenate: step 5/5. Functionally, catalyzes the phosphorylation of the 3'-hydroxyl group of dephosphocoenzyme A to form coenzyme A. The chain is Dephospho-CoA kinase from Vibrio cholerae serotype O1 (strain ATCC 39315 / El Tor Inaba N16961).